A 440-amino-acid polypeptide reads, in one-letter code: Serine hydroxymethyltransferase (440 aa).

(6S)-5,6,7,8-tetrahydrofolate-binding positions include L119 and 123–125 (GHL). Residue K228 is modified to N6-(pyridoxal phosphate)lysine. (6S)-5,6,7,8-tetrahydrofolate is bound at residue 370–372 (SPF).

Belongs to the SHMT family. As to quaternary structure, homodimer. The cofactor is pyridoxal 5'-phosphate.

The protein resides in the cytoplasm. The enzyme catalyses (6R)-5,10-methylene-5,6,7,8-tetrahydrofolate + glycine + H2O = (6S)-5,6,7,8-tetrahydrofolate + L-serine. It functions in the pathway one-carbon metabolism; tetrahydrofolate interconversion. Its pathway is amino-acid biosynthesis; glycine biosynthesis; glycine from L-serine: step 1/1. Its function is as follows. Catalyzes the reversible interconversion of serine and glycine with tetrahydrofolate (THF) serving as the one-carbon carrier. This reaction serves as the major source of one-carbon groups required for the biosynthesis of purines, thymidylate, methionine, and other important biomolecules. Also exhibits THF-independent aldolase activity toward beta-hydroxyamino acids, producing glycine and aldehydes, via a retro-aldol mechanism. In Chlorobaculum tepidum (strain ATCC 49652 / DSM 12025 / NBRC 103806 / TLS) (Chlorobium tepidum), this protein is Serine hydroxymethyltransferase.